We begin with the raw amino-acid sequence, 229 residues long: ATP synthase subunit a (229 aa).

6 helical membrane-spanning segments follow: residues 25–45, 82–102, 104–124, 142–162, 181–201, and 202–222; these read ADAI…SMLA, FFPL…IGLV, GFFP…IVFV, FLGP…IGHF, LVLM…MMLM, and GVLV…IYIQ.

The protein belongs to the ATPase A chain family. As to quaternary structure, F-type ATPases have 2 components, CF(1) - the catalytic core - and CF(0) - the membrane proton channel. CF(1) has five subunits: alpha(3), beta(3), gamma(1), delta(1), epsilon(1). CF(0) has three main subunits: a(1), b(2) and c(9-12). The alpha and beta chains form an alternating ring which encloses part of the gamma chain. CF(1) is attached to CF(0) by a central stalk formed by the gamma and epsilon chains, while a peripheral stalk is formed by the delta and b chains.

The protein resides in the cell inner membrane. Key component of the proton channel; it plays a direct role in the translocation of protons across the membrane. This Geotalea uraniireducens (strain Rf4) (Geobacter uraniireducens) protein is ATP synthase subunit a.